The primary structure comprises 91 residues: Acylphosphatase (91 aa).

The Acylphosphatase-like domain occupies 6-91 (CMRCYISGRV…WEDYISFDVL (86 aa)). Active-site residues include R21 and N39.

Belongs to the acylphosphatase family.

It carries out the reaction an acyl phosphate + H2O = a carboxylate + phosphate + H(+). The sequence is that of Acylphosphatase (acyP) from Legionella pneumophila subsp. pneumophila (strain Philadelphia 1 / ATCC 33152 / DSM 7513).